Here is a 597-residue protein sequence, read N- to C-terminus: FERM domain-containing protein 3 (597 aa).

Positions 32 to 312 (MRCTIRLLDD…ENQAFYKYAK (281 aa)) constitute an FERM domain. Residues 409–435 (SAPLISSSPVKAAQEYEDPPSEEEDKI) form a disordered region. Residues 423 to 432 (EYEDPPSEEE) show a composition bias toward acidic residues. A helical transmembrane segment spans residues 531–551 (LLVVGLGLLLFVFPLLLLLLE).

It localises to the membrane. Its function is as follows. Putative tumor suppressor gene that may be implicated in the origin and progression of lung cancer. This is FERM domain-containing protein 3 (FRMD3) from Pongo abelii (Sumatran orangutan).